A 70-amino-acid polypeptide reads, in one-letter code: V-type proton ATPase subunit e1 (70 aa).

2 consecutive transmembrane segments (helical) span residues 1 to 21 and 36 to 56; these read MGFL…SLCV and LTLV…VYIA.

It belongs to the V-ATPase e1/e2 subunit family. As to quaternary structure, V-ATPase is a heteromultimeric enzyme composed of a peripheral catalytic V1 complex (components A to H) attached to an integral membrane V0 proton pore complex (components: a, c, c'', d and e).

It is found in the golgi apparatus. The protein localises to the trans-Golgi network membrane. Subunit of the integral membrane V0 complex of vacuolar ATPase. V-ATPase is responsible for acidifying a variety of intracellular compartments in eukaryotic cells. This chain is V-type proton ATPase subunit e1 (VHA-e1), found in Arabidopsis thaliana (Mouse-ear cress).